The sequence spans 885 residues: Pyruvate, phosphate dikinase (885 aa).

Residues 1 to 342 (MQRVYAFEDG…LYMLQTRNGK (342 aa)) are N-terminal. An ATP-binding site is contributed by Arg-91. The tract at residues 343 to 399 (MNATATVRTGVDMVEEGLITKEQAIMRIAPQSVDQLLHKNMPANYAEAPLVKGLPAS) is linker 1. The interval 400 to 497 (PGAATGAVVF…EVHEGDILTI (98 aa)) is central. Catalysis depends on His-454, which acts as the Tele-phosphohistidine intermediate. Positions 498–533 (DGSTGCVYKGEVPLEEPQVGSGYFGTILKWANEIKK) are linker 2. A C-terminal region spans residues 534 to 885 (IGVFANADLP…QAQIRHPREN (352 aa)). Positions 561, 617, 752, 773, 774, 775, and 776 each coordinate substrate. A Mg(2+)-binding site is contributed by Glu-752. Mg(2+) is bound at residue Asp-776. Cys-839 functions as the Proton donor in the catalytic mechanism.

Belongs to the PEP-utilizing enzyme family. As to quaternary structure, homodimer. Requires Mg(2+) as cofactor.

The enzyme catalyses pyruvate + phosphate + ATP = phosphoenolpyruvate + AMP + diphosphate + H(+). Catalyzes the dephosphorylation of phosphoenolpyruvate and diphosphate to produce ATP. This is Pyruvate, phosphate dikinase from Entamoeba histolytica (strain ATCC 30459 / HM-1:IMSS / ABRM).